Here is a 637-residue protein sequence, read N- to C-terminus: Probable potassium transport system protein Kup (637 aa).

Transmembrane regions (helical) follow at residues 24–44 (LAIA…LYAL), 64–84 (VISL…LLFV), 113–133 (AGAL…DAVI), 151–171 (PHLS…LFWI), 182–202 (LFGP…VYHI), 225–245 (LLQA…AEAL), 261–281 (AYGL…ALLI), 290–310 (PFFL…STVA), 351–371 (IYVP…VIGF), 381–401 (YGIA…VVMV), 409–429 (LLVG…FGAN), and 433–453 (VAQG…LLMT).

The protein belongs to the HAK/KUP transporter (TC 2.A.72) family.

The protein localises to the cell inner membrane. The enzyme catalyses K(+)(in) + H(+)(in) = K(+)(out) + H(+)(out). Transport of potassium into the cell. Likely operates as a K(+):H(+) symporter. This chain is Probable potassium transport system protein Kup, found in Burkholderia ambifaria (strain ATCC BAA-244 / DSM 16087 / CCUG 44356 / LMG 19182 / AMMD) (Burkholderia cepacia (strain AMMD)).